Consider the following 360-residue polypeptide: Phosphoserine aminotransferase (360 aa).

Arg-41 lines the L-glutamate pocket. The pyridoxal 5'-phosphate site is built by Trp-101, Thr-152, Asp-172, and Gln-195. An N6-(pyridoxal phosphate)lysine modification is found at Lys-196. 237–238 (NT) lines the pyridoxal 5'-phosphate pocket.

This sequence belongs to the class-V pyridoxal-phosphate-dependent aminotransferase family. SerC subfamily. As to quaternary structure, homodimer. Requires pyridoxal 5'-phosphate as cofactor.

It localises to the cytoplasm. It catalyses the reaction O-phospho-L-serine + 2-oxoglutarate = 3-phosphooxypyruvate + L-glutamate. The catalysed reaction is 4-(phosphooxy)-L-threonine + 2-oxoglutarate = (R)-3-hydroxy-2-oxo-4-phosphooxybutanoate + L-glutamate. It functions in the pathway amino-acid biosynthesis; L-serine biosynthesis; L-serine from 3-phospho-D-glycerate: step 2/3. The protein operates within cofactor biosynthesis; pyridoxine 5'-phosphate biosynthesis; pyridoxine 5'-phosphate from D-erythrose 4-phosphate: step 3/5. Its function is as follows. Catalyzes the reversible conversion of 3-phosphohydroxypyruvate to phosphoserine and of 3-hydroxy-2-oxo-4-phosphonooxybutanoate to phosphohydroxythreonine. The chain is Phosphoserine aminotransferase from Burkholderia ambifaria (strain ATCC BAA-244 / DSM 16087 / CCUG 44356 / LMG 19182 / AMMD) (Burkholderia cepacia (strain AMMD)).